A 405-amino-acid polypeptide reads, in one-letter code: Deoxyguanosinetriphosphate triphosphohydrolase-like protein (405 aa).

The HD domain occupies 75 to 219 (RLTHTIEVAQ…AAIADDIAYN (145 aa)).

It belongs to the dGTPase family. Type 2 subfamily.

The protein is Deoxyguanosinetriphosphate triphosphohydrolase-like protein of Rhizobium johnstonii (strain DSM 114642 / LMG 32736 / 3841) (Rhizobium leguminosarum bv. viciae).